A 315-amino-acid chain; its full sequence is Serine/threonine-protein phosphatase PP2A catalytic subunit 3 (315 aa).

Residues Asp-62, His-64, Asp-90, and Asn-122 each coordinate Mn(2+). Residue His-123 is the Proton donor of the active site. The Mn(2+) site is built by His-172 and His-247. Residues 294–315 are disordered; sequence QFEPAPRENEPHTTRRVPDYFL. The segment covering 298 to 315 has biased composition (basic and acidic residues); sequence APRENEPHTTRRVPDYFL. Leu-315 is modified (leucine methyl ester).

It belongs to the PPP phosphatase family. PP-2A subfamily. Mn(2+) is required as a cofactor. In terms of processing, reversibly methyl esterified on Leu-315 by leucine carboxyl methyltransferase 1 (PPM1) and protein phosphatase methylesterase 1 (PPE1). Carboxyl methylation influences the affinity of the catalytic subunit for the different regulatory subunits, thereby modulating the PP2A holoenzyme's substrate specificity, enzyme activity and cellular localization.

The enzyme catalyses O-phospho-L-seryl-[protein] + H2O = L-seryl-[protein] + phosphate. It catalyses the reaction O-phospho-L-threonyl-[protein] + H2O = L-threonyl-[protein] + phosphate. The sequence is that of Serine/threonine-protein phosphatase PP2A catalytic subunit 3 (Ppn3) from Paramecium tetraurelia.